A 157-amino-acid chain; its full sequence is S-ribosylhomocysteine lyase (157 aa).

Positions 54, 58, and 126 each coordinate Fe cation.

The protein belongs to the LuxS family. As to quaternary structure, homodimer. The cofactor is Fe cation.

The catalysed reaction is S-(5-deoxy-D-ribos-5-yl)-L-homocysteine = (S)-4,5-dihydroxypentane-2,3-dione + L-homocysteine. In terms of biological role, involved in the synthesis of autoinducer 2 (AI-2) which is secreted by bacteria and is used to communicate both the cell density and the metabolic potential of the environment. The regulation of gene expression in response to changes in cell density is called quorum sensing. Catalyzes the transformation of S-ribosylhomocysteine (RHC) to homocysteine (HC) and 4,5-dihydroxy-2,3-pentadione (DPD). The protein is S-ribosylhomocysteine lyase of Bacillus cereus (strain G9842).